Reading from the N-terminus, the 199-residue chain is Octanoyltransferase (199 aa).

The BPL/LPL catalytic domain occupies 27–199 (SNSCDELWLL…FVQYFLTQFK (173 aa)). Substrate-binding positions include 66 to 73 (RGGQVTYH), 133 to 135 (SIG), and 146 to 148 (GIA). Cys164 acts as the Acyl-thioester intermediate in catalysis.

It belongs to the LipB family.

Its subcellular location is the cytoplasm. The enzyme catalyses octanoyl-[ACP] + L-lysyl-[protein] = N(6)-octanoyl-L-lysyl-[protein] + holo-[ACP] + H(+). It participates in protein modification; protein lipoylation via endogenous pathway; protein N(6)-(lipoyl)lysine from octanoyl-[acyl-carrier-protein]: step 1/2. Catalyzes the transfer of endogenously produced octanoic acid from octanoyl-acyl-carrier-protein onto the lipoyl domains of lipoate-dependent enzymes. Lipoyl-ACP can also act as a substrate although octanoyl-ACP is likely to be the physiological substrate. The sequence is that of Octanoyltransferase from Legionella pneumophila (strain Paris).